The chain runs to 456 residues: 3-isopropylmalate dehydratase large subunit (456 aa).

[4Fe-4S] cluster-binding residues include C336, C396, and C399.

The protein belongs to the aconitase/IPM isomerase family. LeuC type 1 subfamily. Heterodimer of LeuC and LeuD. The cofactor is [4Fe-4S] cluster.

It carries out the reaction (2R,3S)-3-isopropylmalate = (2S)-2-isopropylmalate. The protein operates within amino-acid biosynthesis; L-leucine biosynthesis; L-leucine from 3-methyl-2-oxobutanoate: step 2/4. In terms of biological role, catalyzes the isomerization between 2-isopropylmalate and 3-isopropylmalate, via the formation of 2-isopropylmaleate. The chain is 3-isopropylmalate dehydratase large subunit from Staphylococcus epidermidis (strain ATCC 12228 / FDA PCI 1200).